Reading from the N-terminus, the 159-residue chain is Ribosomal RNA large subunit methyltransferase H (159 aa).

S-adenosyl-L-methionine is bound by residues Gly108 and 127-132 (FGPMTF).

This sequence belongs to the RNA methyltransferase RlmH family. In terms of assembly, homodimer.

The protein resides in the cytoplasm. It carries out the reaction pseudouridine(1915) in 23S rRNA + S-adenosyl-L-methionine = N(3)-methylpseudouridine(1915) in 23S rRNA + S-adenosyl-L-homocysteine + H(+). Specifically methylates the pseudouridine at position 1915 (m3Psi1915) in 23S rRNA. The sequence is that of Ribosomal RNA large subunit methyltransferase H from Magnetococcus marinus (strain ATCC BAA-1437 / JCM 17883 / MC-1).